Consider the following 338-residue polypeptide: Formimidoylglutamase (338 aa).

6 residues coordinate Mn(2+): H137, D166, H168, D170, C259, and D261.

The protein belongs to the arginase family. The cofactor is Mn(2+).

It carries out the reaction N-formimidoyl-L-glutamate + H2O = formamide + L-glutamate. It functions in the pathway amino-acid degradation; L-histidine degradation into L-glutamate; L-glutamate from N-formimidoyl-L-glutamate (hydrolase route): step 1/1. Its function is as follows. Catalyzes the conversion of N-formimidoyl-L-glutamate to L-glutamate and formamide. The protein is Formimidoylglutamase of Clostridium tetani (strain Massachusetts / E88).